The following is a 238-amino-acid chain: 2-C-methyl-D-erythritol 4-phosphate cytidylyltransferase (238 aa).

Belongs to the IspD/TarI cytidylyltransferase family. IspD subfamily.

The enzyme catalyses 2-C-methyl-D-erythritol 4-phosphate + CTP + H(+) = 4-CDP-2-C-methyl-D-erythritol + diphosphate. It participates in isoprenoid biosynthesis; isopentenyl diphosphate biosynthesis via DXP pathway; isopentenyl diphosphate from 1-deoxy-D-xylulose 5-phosphate: step 2/6. Catalyzes the formation of 4-diphosphocytidyl-2-C-methyl-D-erythritol from CTP and 2-C-methyl-D-erythritol 4-phosphate (MEP). This is 2-C-methyl-D-erythritol 4-phosphate cytidylyltransferase from Pelotomaculum thermopropionicum (strain DSM 13744 / JCM 10971 / SI).